We begin with the raw amino-acid sequence, 698 residues long: Polyribonucleotide nucleotidyltransferase (698 aa).

Mg(2+)-binding residues include aspartate 485 and aspartate 491. In terms of domain architecture, KH spans 552-611; it reads PRITTIKINPEKIRDVIGKGGAVIRALTEETGTTIELDDNGTVKIASSNGEATKEAIRRI. An S1 motif domain is found at 621–689; sequence GRIYNGKVIR…RQGRVRLSIK (69 aa).

Belongs to the polyribonucleotide nucleotidyltransferase family. Component of the RNA degradosome, which is a multiprotein complex involved in RNA processing and mRNA degradation. Mg(2+) serves as cofactor.

The protein resides in the cytoplasm. The enzyme catalyses RNA(n+1) + phosphate = RNA(n) + a ribonucleoside 5'-diphosphate. Functionally, involved in mRNA degradation. Catalyzes the phosphorolysis of single-stranded polyribonucleotides processively in the 3'- to 5'-direction. This is Polyribonucleotide nucleotidyltransferase from Shewanella frigidimarina (strain NCIMB 400).